Here is a 23-residue protein sequence, read N- to C-terminus: GLGSVLGKILKMGVNLLGGAPKQ.

In terms of tissue distribution, expressed by the skin glands.

The protein resides in the secreted. In terms of biological role, antimicrobial peptide. The polypeptide is Caerulein precursor fragment BM2 (Xenopus boumbaensis (Mawa clawed frog)).